A 1180-amino-acid chain; its full sequence is DNA-directed RNA polymerase subunit beta (1180 aa).

It belongs to the RNA polymerase beta chain family. As to quaternary structure, the RNAP catalytic core consists of 2 alpha, 1 beta, 1 beta' and 1 omega subunit. When a sigma factor is associated with the core the holoenzyme is formed, which can initiate transcription.

The enzyme catalyses RNA(n) + a ribonucleoside 5'-triphosphate = RNA(n+1) + diphosphate. DNA-dependent RNA polymerase catalyzes the transcription of DNA into RNA using the four ribonucleoside triphosphates as substrates. This Macrococcus caseolyticus (strain JCSC5402) (Macrococcoides caseolyticum) protein is DNA-directed RNA polymerase subunit beta.